The sequence spans 385 residues: Succinate--CoA ligase [ADP-forming] subunit beta (385 aa).

The ATP-grasp domain maps to 9–241 (KELLRDFGIN…IDEEEPSELE (233 aa)). Residues Lys-46, 53 to 55 (GRG), Glu-99, Thr-102, and Glu-107 contribute to the ATP site. The Mg(2+) site is built by Asn-196 and Asp-210. Substrate is bound by residues Asn-261 and 318 to 320 (GIV).

The protein belongs to the succinate/malate CoA ligase beta subunit family. In terms of assembly, heterotetramer of two alpha and two beta subunits. Mg(2+) is required as a cofactor.

It carries out the reaction succinate + ATP + CoA = succinyl-CoA + ADP + phosphate. The enzyme catalyses GTP + succinate + CoA = succinyl-CoA + GDP + phosphate. It participates in carbohydrate metabolism; tricarboxylic acid cycle; succinate from succinyl-CoA (ligase route): step 1/1. Functionally, succinyl-CoA synthetase functions in the citric acid cycle (TCA), coupling the hydrolysis of succinyl-CoA to the synthesis of either ATP or GTP and thus represents the only step of substrate-level phosphorylation in the TCA. The beta subunit provides nucleotide specificity of the enzyme and binds the substrate succinate, while the binding sites for coenzyme A and phosphate are found in the alpha subunit. The sequence is that of Succinate--CoA ligase [ADP-forming] subunit beta from Campylobacter fetus subsp. fetus (strain 82-40).